The chain runs to 526 residues: Ferrochelatase-2, chloroplastic (526 aa).

It belongs to the ferrochelatase family.

It is found in the plastid. The protein localises to the chloroplast. The enzyme catalyses heme b + 2 H(+) = protoporphyrin IX + Fe(2+). Its pathway is porphyrin-containing compound metabolism; protoheme biosynthesis; protoheme from protoporphyrin-IX: step 1/1. In terms of biological role, catalyzes the ferrous insertion into protoporphyrin IX. This Oryza sativa subsp. japonica (Rice) protein is Ferrochelatase-2, chloroplastic.